Here is a 199-residue protein sequence, read N- to C-terminus: Peptidyl-tRNA hydrolase (199 aa).

Tyr-18 contributes to the tRNA binding site. His-23 acts as the Proton acceptor in catalysis. TRNA-binding residues include Tyr-69, Asn-71, and Asn-117.

Belongs to the PTH family. Monomer.

Its subcellular location is the cytoplasm. It carries out the reaction an N-acyl-L-alpha-aminoacyl-tRNA + H2O = an N-acyl-L-amino acid + a tRNA + H(+). Its function is as follows. Hydrolyzes ribosome-free peptidyl-tRNAs (with 1 or more amino acids incorporated), which drop off the ribosome during protein synthesis, or as a result of ribosome stalling. Functionally, catalyzes the release of premature peptidyl moieties from peptidyl-tRNA molecules trapped in stalled 50S ribosomal subunits, and thus maintains levels of free tRNAs and 50S ribosomes. The protein is Peptidyl-tRNA hydrolase of Prochlorococcus marinus (strain MIT 9515).